The following is a 491-amino-acid chain: Immediate early protein IE1 (491 aa).

The span at 1 to 11 (MESSAKRKMDP) shows a compositional bias: basic and acidic residues. The nuclear localization signal stretch occupies residues 1-24 (MESSAKRKMDPDNPDEGPSSKVPR). The disordered stretch occupies residues 1–30 (MESSAKRKMDPDNPDEGPSSKVPRPETPVT). The tract at residues 132–346 (ILDKVHEPFE…SVMKRRIEEI (215 aa)) is interaction with host PML, interference with PML sumoylation and disruption of PML-associated nuclear bodies. Residues 373–445 (AIAEESDEEE…EEGAQEERED (73 aa)) are interaction with host STAT2. Residues 410–420 (ATIPLSSVIVA) are modulation of STAT3/STAT1 signaling. Residues 410-445 (ATIPLSSVIVAENSDQEESEQSDEEEEEGAQEERED) form an interaction with host STAT3 region. Positions 421 to 472 (ENSDQEESEQSDEEEEEGAQEEREDTVSVKSEPVSEIEEVAPEEEEDGAEEP) are acidic. Residues 421-491 (ENSDQEESEQ…PMVTRSKADQ (71 aa)) form a disordered region. A compositionally biased stretch (acidic residues) spans 423-444 (SDQEESEQSDEEEEEGAQEERE). The interval 449 to 452 (VKSE) is interaction with host SUMO1. K450 participates in a covalent cross-link: Glycyl lysine isopeptide (Lys-Gly) (interchain with G-Cter in SUMO). Positions 455–470 (SEIEEVAPEEEEDGAE) are enriched in acidic residues. A chromosome-tethering domain (CTD), binding to histones region spans residues 475–491 (SGGKSTHPMVTRSKADQ).

This sequence belongs to the HHV-5 IE1 protein family. Forms homodimers. Interacts with human p53/TP53; this interaction inhibits p53/TP53-dependent transactivation activity. Interacts with host STAT1. Interacts with host STAT2; this interaction promotes viral growth and counteracts the antiviral interferon response. May also interact with the host STAT1-STAT2 heterodimer. Interacts with host STAT3; this interaction leads to STAT3 nuclear accumulation and disruption of IL6-induced STAT3 phosphorylation. Interacts with host PML; this interaction inhibits host PML de novo sumoylation and probably inhibits PML regulation of type I and type II interferon-induced gene expression. Interacts with host DAXX. Interacts with host SP100. Interacts with host E2F1. Interacts with host RB1. Interacts with host HDAC1; this interaction inhibits histone deacetylation and promotes viral transcription. Interacts with host HDAC2; this interaction inhibits histone deacetylation and promotes viral transcription. Interacts with host HDAC3; this interaction inhibits histone deacetylation and promotes viral transcription. Interacts with host PLSCR1; this interaction inhibits IE1 transactivating activity. In terms of processing, sumoylated by host PML. Sumoylation abolishes the interaction with host STAT2 and thus the IE1-mediated repression of interferon-stimulated genes.

It is found in the host nucleus. In terms of biological role, plays an important role in transactivating viral early genes as well as activating its own promoter, probably by altering the viral chromatin structure. Expression of IE1 and IE2 proteins is critical for the establishment of lytic infection and reactivation from viral latency. Disrupts PML-associated ND10 nuclear bodies by interfering with host PML and SP100 sumoylation thereby altering the regulation of type I and type II interferon-induced gene expression. Promotes efficient viral growth by interacting with and directing host SP100 to degradation, leading to enhanced acetylation level of histones. In addition, functions in counteracting the host innate antiviral response. Inhibits the type I interferon pathway by directly interacting with and sequestrating host STAT2. Also targets type II interferon pathway by repressing IL6- and STAT3 target genes. Repression of STAT3 genes is due to STAT3 nuclear accumulation and disruption of IL6-induced STAT3 phosphorylation by IE1. This repression is followed by phosphorylation and activation of STAT1. Inhibits host ISG transcription by sequestering host ISGF3 in a PML- and STAT2- binding dependent manner. Alters host cell cycle progression, probably through its interaction with host E2F1 or RB1 that overcomes the RB1-mediated repression of E2F-responsive promoters. This chain is Immediate early protein IE1 (UL123), found in Human cytomegalovirus (strain AD169) (HHV-5).